Here is a 375-residue protein sequence, read N- to C-terminus: 23S rRNA (uracil(747)-C(5))-methyltransferase RlmC (375 aa).

Residues C3, C11, C14, and C87 each contribute to the [4Fe-4S] cluster site. Residues Q212, F241, E262, and N307 each contribute to the S-adenosyl-L-methionine site. Catalysis depends on C334, which acts as the Nucleophile.

This sequence belongs to the class I-like SAM-binding methyltransferase superfamily. RNA M5U methyltransferase family. RlmC subfamily.

It carries out the reaction uridine(747) in 23S rRNA + S-adenosyl-L-methionine = 5-methyluridine(747) in 23S rRNA + S-adenosyl-L-homocysteine + H(+). Functionally, catalyzes the formation of 5-methyl-uridine at position 747 (m5U747) in 23S rRNA. In Vibrio cholerae serotype O1 (strain ATCC 39541 / Classical Ogawa 395 / O395), this protein is 23S rRNA (uracil(747)-C(5))-methyltransferase RlmC.